The following is a 630-amino-acid chain: DNA mismatch repair protein MutL (630 aa).

Disordered stretches follow at residues 361 to 386 (VLSS…APAE) and 407 to 431 (FERK…GQAE). Residues 407–421 (FERKQEEEVGEERCS) show a composition bias toward basic and acidic residues.

This sequence belongs to the DNA mismatch repair MutL/HexB family.

This protein is involved in the repair of mismatches in DNA. It is required for dam-dependent methyl-directed DNA mismatch repair. May act as a 'molecular matchmaker', a protein that promotes the formation of a stable complex between two or more DNA-binding proteins in an ATP-dependent manner without itself being part of a final effector complex. The sequence is that of DNA mismatch repair protein MutL from Geobacillus kaustophilus (strain HTA426).